A 172-amino-acid chain; its full sequence is Ribosome maturation factor RimM (172 aa).

Positions 99–171 (DDIPTWNYFI…LLTVEVPDGL (73 aa)) constitute a PRC barrel domain.

The protein belongs to the RimM family. Binds ribosomal protein uS19.

Its subcellular location is the cytoplasm. An accessory protein needed during the final step in the assembly of 30S ribosomal subunit, possibly for assembly of the head region. Essential for efficient processing of 16S rRNA. May be needed both before and after RbfA during the maturation of 16S rRNA. It has affinity for free ribosomal 30S subunits but not for 70S ribosomes. This chain is Ribosome maturation factor RimM, found in Phocaeicola vulgatus (strain ATCC 8482 / DSM 1447 / JCM 5826 / CCUG 4940 / NBRC 14291 / NCTC 11154) (Bacteroides vulgatus).